Here is a 287-residue protein sequence, read N- to C-terminus: MKTMTGRLVAAALVCGGAFSGAAVSAGPDDPLVINGEIEIVTRAPTPAHLADRFDEIRSGWTFRTDDTQALEMDDFENSGMVFVEEARAVWDRPEGTEGKACADCHGAVDDGMYGLRAVYPKYVESAGKVRTVEQMINACRTSRMGAPEWDYIGPDMTAMVALIASVSRGMPVSVAIDGPAQSTWEKGREIYYTRYGQLDLSCASCHEQYFDHYIRADHLSQGQINGFPSYRLKNARLNAVHDRFRGCIRDTRGVPFAVGSPEFVALELYVASRGNGLSVEGPSVRN.

Positions 1-26 (MKTMTGRLVAAALVCGGAFSGAAVSA) are cleaved as a signal peptide. Residues 74–168 (DDFENSGMVF…AMVALIASVS (95 aa)) enclose the Cytochrome c domain. Residues Cys102, Cys105, His106, Cys140, Cys203, Cys206, and His207 each coordinate heme c. Arg244 provides a ligand contact to substrate. Heme c is bound at residue Cys248. The active-site Cysteine persulfide intermediate is the Cys248.

Belongs to the SoxA family. In terms of assembly, heterodimer of SoxA and SoxX. Heme c is required as a cofactor. In terms of processing, cysteine persulfide at Cys-248.

The protein resides in the periplasm. It carries out the reaction L-cysteinyl-[SoxY protein] + thiosulfate + 2 Fe(III)-[cytochrome c] = S-sulfosulfanyl-L-cysteinyl-[SoxY protein] + 2 Fe(II)-[cytochrome c] + 2 H(+). The catalysed reaction is S-sulfanyl-L-cysteinyl-[SoxY protein] + thiosulfate + 2 Fe(III)-[cytochrome c] = S-(2-sulfodisulfanyl)-L-cysteinyl-[SoxY protein] + 2 Fe(II)-[cytochrome c] + 2 H(+). C-type diheme cytochrome, which is part of the SoxAX cytochrome complex involved in sulfur oxidation. The SoxAX complex catalyzes the formation of a heterodisulfide bond between the conserved cysteine residue on a sulfur carrier SoxYZ complex subunit SoxY and thiosulfate or other inorganic sulfur substrates. This leads to the liberation of two electrons, which may be transferred from the SoxAX complex to another cytochrome c and which then may be used for reductive CO(2) fixation. This Rhodovulum sulfidophilum (Rhodobacter sulfidophilus) protein is L-cysteine S-thiosulfotransferase subunit SoxA.